The chain runs to 304 residues: Aspartate carbamoyltransferase catalytic subunit (304 aa).

Carbamoyl phosphate is bound by residues Arg-57 and Thr-58. L-aspartate is bound at residue Lys-85. Residues Arg-107, His-134, and Gln-137 each coordinate carbamoyl phosphate. L-aspartate contacts are provided by Arg-167 and Arg-216. 2 residues coordinate carbamoyl phosphate: Ala-260 and Pro-261.

Belongs to the aspartate/ornithine carbamoyltransferase superfamily. ATCase family. In terms of assembly, heterododecamer (2C3:3R2) of six catalytic PyrB chains organized as two trimers (C3), and six regulatory PyrI chains organized as three dimers (R2).

The enzyme catalyses carbamoyl phosphate + L-aspartate = N-carbamoyl-L-aspartate + phosphate + H(+). The protein operates within pyrimidine metabolism; UMP biosynthesis via de novo pathway; (S)-dihydroorotate from bicarbonate: step 2/3. Catalyzes the condensation of carbamoyl phosphate and aspartate to form carbamoyl aspartate and inorganic phosphate, the committed step in the de novo pyrimidine nucleotide biosynthesis pathway. The polypeptide is Aspartate carbamoyltransferase catalytic subunit (Fusobacterium nucleatum subsp. nucleatum (strain ATCC 25586 / DSM 15643 / BCRC 10681 / CIP 101130 / JCM 8532 / KCTC 2640 / LMG 13131 / VPI 4355)).